The chain runs to 892 residues: Translation initiation factor IF-2 (892 aa).

Composition is skewed to basic and acidic residues over residues 93 to 159 (VKRD…KDKV) and 166 to 216 (DMTK…EENK). Residues 93 to 304 (VKRDPQEAER…SSLQQGFQKP (212 aa)) form a disordered region. Basic residues predominate over residues 254–269 (GRGRNAKAARPAKKGK). Basic and acidic residues predominate over residues 270–282 (HAESKADREEARA). In terms of domain architecture, tr-type G spans 391-560 (PRAPVVTIMG…LLQAEVLELK (170 aa)). Residues 400-407 (GHVDHGKT) are G1. Position 400 to 407 (400 to 407 (GHVDHGKT)) interacts with GTP. Residues 425 to 429 (GITQH) are G2. Positions 446-449 (DTPG) are G3. GTP-binding positions include 446–450 (DTPGH) and 500–503 (NKID). Residues 500 to 503 (NKID) form a G4 region. A G5 region spans residues 536 to 538 (SAK).

Belongs to the TRAFAC class translation factor GTPase superfamily. Classic translation factor GTPase family. IF-2 subfamily.

The protein resides in the cytoplasm. Its function is as follows. One of the essential components for the initiation of protein synthesis. Protects formylmethionyl-tRNA from spontaneous hydrolysis and promotes its binding to the 30S ribosomal subunits. Also involved in the hydrolysis of GTP during the formation of the 70S ribosomal complex. This is Translation initiation factor IF-2 from Salmonella gallinarum (strain 287/91 / NCTC 13346).